Here is a 162-residue protein sequence, read N- to C-terminus: Interleukin-15 (162 aa).

The N-terminal stretch at 1–29 (MRILKPYLRSTSIQCYLCLLLNSHFLTEA) is a signal peptide. A propeptide spanning residues 30–48 (GIHVFILGCISAGLPKTEA) is cleaved from the precursor. Cystine bridges form between Cys-83-Cys-133 and Cys-90-Cys-136. N-linked (GlcNAc...) asparagine glycosylation is found at Asn-113, Asn-121, and Asn-127.

This sequence belongs to the IL-15/IL-21 family.

The protein resides in the secreted. In terms of biological role, cytokine that plays a major role in the development of inflammatory and protective immune responses to microbial invaders and parasites by modulating immune cells of both the innate and adaptive immune systems. Stimulates the proliferation of natural killer cells, T-cells and B-cells and promotes the secretion of several cytokines. In monocytes, induces the production of IL8 and monocyte chemotactic protein 1/CCL2, two chemokines that attract neutrophils and monocytes respectively to sites of infection. Unlike most cytokines, which are secreted in soluble form, IL15 is expressed in association with its high affinity IL15RA on the surface of IL15-producing cells and delivers signals to target cells that express IL2RB and IL2RG receptor subunits. Binding to its receptor triggers the phosphorylation of JAK1 and JAK3 and the recruitment and subsequent phosphorylation of signal transducer and activator of transcription-3/STAT3 and STAT5. In mast cells, induces the rapid tyrosine phosphorylation of STAT6 and thereby controls mast cell survival and release of cytokines such as IL4. The polypeptide is Interleukin-15 (IL15) (Ovis aries (Sheep)).